A 224-amino-acid chain; its full sequence is Transcription factor HEC3 (224 aa).

Disordered stretches follow at residues 22 to 42 (SSNN…DPIG) and 68 to 88 (SLTT…EEEP). The segment covering 28 to 37 (KNDDHHHQHN) has biased composition (basic and acidic residues). The span at 68 to 77 (SLTTTTLLSG) shows a compositional bias: low complexity. The span at 78–88 (DQEDDEDEEEP) shows a compositional bias: acidic residues. Positions 125–174 (ISDDPQSVAARHRRERISERIRILQRLVPGGTKMDTASMLDEAIRYVKFL) constitute a bHLH domain. The interval 183–224 (NNTGYTPPPPQDQASQAVTTSWVSPPPPPSFGRGGRGVGELI) is disordered. Polar residues predominate over residues 194–204 (DQASQAVTTSW). Residues 214-224 (GRGGRGVGELI) are compositionally biased toward gly residues.

In terms of assembly, homodimer. Interacts with SPT. As to expression, gynoecium.

Its subcellular location is the nucleus. In terms of biological role, required for the female reproductive tract development and fertility. The chain is Transcription factor HEC3 (HEC3) from Arabidopsis thaliana (Mouse-ear cress).